The following is a 126-amino-acid chain: Fluoride-specific ion channel FluC (126 aa).

4 helical membrane passes run 5-25, 34-54, 71-91, and 100-120; these read ILCV…FYFG, YIFI…GFVL, VTGL…NAVF, and FFLN…LGIY. Residues G76 and T79 each contribute to the Na(+) site.

Belongs to the fluoride channel Fluc/FEX (TC 1.A.43) family.

It is found in the cell inner membrane. It carries out the reaction fluoride(in) = fluoride(out). Its activity is regulated as follows. Na(+) is not transported, but it plays an essential structural role and its presence is essential for fluoride channel function. In terms of biological role, fluoride-specific ion channel. Important for reducing fluoride concentration in the cell, thus reducing its toxicity. This Campylobacter hominis (strain ATCC BAA-381 / DSM 21671 / CCUG 45161 / LMG 19568 / NCTC 13146 / CH001A) protein is Fluoride-specific ion channel FluC.